The sequence spans 700 residues: Polyphosphate kinase (700 aa).

ATP is bound at residue Asn-45. 2 residues coordinate Mg(2+): Arg-373 and Arg-403. One can recognise a PLD phosphodiesterase 1 domain in the interval 428–462 (PGMKIHAKLLLITRREEQGFVRYAHIGTGNFHERT). His-433 acts as the Phosphohistidine intermediate in catalysis. The ATP site is built by Tyr-466, Arg-562, and His-590. The 31-residue stretch at 585-615 (DRFLEHPRVLVVHNDGDPQVFISSADWMERN) folds into the PLD phosphodiesterase 2 domain.

It belongs to the polyphosphate kinase 1 (PPK1) family. The cofactor is Mg(2+). In terms of processing, an intermediate of this reaction is the autophosphorylated ppk in which a phosphate is covalently linked to a histidine residue through a N-P bond.

The catalysed reaction is [phosphate](n) + ATP = [phosphate](n+1) + ADP. Its function is as follows. Catalyzes the reversible transfer of the terminal phosphate of ATP to form a long-chain polyphosphate (polyP). The sequence is that of Polyphosphate kinase from Vibrio vulnificus (strain YJ016).